We begin with the raw amino-acid sequence, 146 residues long: Leghemoglobin Lb120-1 (146 aa).

The region spanning 2–146 (GFTEKQEALV…LASAIKKAMN (145 aa)) is the Globin domain. Nitrated tyrosine occurs at positions 24 and 29. Serine 44 is a binding site for heme b. Serine 44 carries the post-translational modification Phosphoserine. O2 is bound at residue histidine 61. Residues lysine 64, histidine 93, and lysine 96 each contribute to the heme b site. Residue tyrosine 134 is modified to Nitrated tyrosine.

Belongs to the plant globin family. As to quaternary structure, monomer. Nitrated in effective nodules and particularly in hypoxic conditions; this mechanism may play a protective role in the symbiosis by buffering toxic peroxynitrite NO(2)(-). Nitration level decrease during nodule senescence. Post-translationally, phosphorylation at Ser-44 disrupts the molecular environment of its porphyrin ring oxygen binding pocket, thus leading to a reduced oxygen consumption and to the delivery of oxygen O(2) to symbiosomes. Root nodules.

It localises to the cytoplasm. The protein resides in the cytosol. Its subcellular location is the nucleus. Leghemoglobin that reversibly binds oxygen O(2) through a pentacoordinated heme iron. In root nodules, facilitates the diffusion of oxygen to the bacteroids while preventing the bacterial nitrogenase from being inactivated by buffering dioxygen, nitric oxide and carbon monoxide, and promoting the formation of reactive oxygen species (ROS, e.g. H(2)O(2)). This role is essential for symbiotic nitrogen fixation (SNF). The chain is Leghemoglobin Lb120-1 from Pisum sativum (Garden pea).